We begin with the raw amino-acid sequence, 137 residues long: Small ribosomal subunit protein uS9 (137 aa).

A disordered region spans residues leucine 105–arginine 137. Residues glycine 109–lysine 122 show a composition bias toward basic and acidic residues. Positions tyrosine 123–arginine 137 are enriched in basic residues.

It belongs to the universal ribosomal protein uS9 family.

In Synechococcus sp. (strain JA-3-3Ab) (Cyanobacteria bacterium Yellowstone A-Prime), this protein is Small ribosomal subunit protein uS9.